Reading from the N-terminus, the 899-residue chain is Protein translocase subunit SecA (899 aa).

Residues Gln-87, 105-109, and Asp-516 each bind ATP; that span reads GEGKT. Residues Cys-884, Cys-886, Cys-895, and His-896 each coordinate Zn(2+).

The protein belongs to the SecA family. Monomer and homodimer. Part of the essential Sec protein translocation apparatus which comprises SecA, SecYEG and auxiliary proteins SecDF. Other proteins may also be involved. It depends on Zn(2+) as a cofactor.

It is found in the cell inner membrane. The protein resides in the cytoplasm. It carries out the reaction ATP + H2O + cellular proteinSide 1 = ADP + phosphate + cellular proteinSide 2.. Functionally, part of the Sec protein translocase complex. Interacts with the SecYEG preprotein conducting channel. Has a central role in coupling the hydrolysis of ATP to the transfer of proteins into and across the cell membrane, serving as an ATP-driven molecular motor driving the stepwise translocation of polypeptide chains across the membrane. The sequence is that of Protein translocase subunit SecA from Borrelia garinii subsp. bavariensis (strain ATCC BAA-2496 / DSM 23469 / PBi) (Borreliella bavariensis).